The chain runs to 97 residues: Small ribosomal subunit protein bS6 (97 aa).

The protein belongs to the bacterial ribosomal protein bS6 family.

In terms of biological role, binds together with bS18 to 16S ribosomal RNA. This chain is Small ribosomal subunit protein bS6, found in Listeria innocua serovar 6a (strain ATCC BAA-680 / CLIP 11262).